The following is a 561-amino-acid chain: MSMENFAQLLEESFTLQEMNPGEVITAEVVAIDQNFVTVNAGLKSESLIDVAEFKNAQGEIEVKVGDFVTVTIESVENGFGETKLSREKAKRAADWIALEEAMENGDILSGIINGKVKGGLTVMISSIRAFLPGSLVDVRPVKDTSHFEGKEIEFKVIKLDKKRNNVVVSRRAVLEATLGEERKALLENLQEGSVIKGIVKNITDYGAFVDLGGIDGLLHITDLAWRRVKHPSEVLEVGQEVEAKVLKFDQEKQRVSLGMKQLGEDPWSGLTRRYPQGTRLFGKVSNLTDYGAFVEIEQGIEGLVHVSEMDWTNKNVHPSKVVQLGDEVEVMILEIDEGRRRISLGMKQCQANPWEEFAANHNKGDKISGAVKSITDFGVFVGLPGGIDGLVHLSDLSWTESGEEAVRKYKKGEEVEAVVLAIDVEKERISLGIKQLEGDPFGNFISVNDKGSLVKGSVKSVDAKGAVIALSDEVEGYLPASEFAADRVEDLTTKLKEGDEVEAVIVTVDRKNRSIKLSVKAKDAKESREALNSVNAAANANAGTTSLGDLLKAKLSGEQE.

6 consecutive S1 motif domains span residues Gly-22 to Glu-88, Gly-106 to Arg-172, Gly-193 to Lys-261, Gly-278 to Lys-348, Gly-365 to Lys-435, and Gly-452 to Lys-521.

This sequence belongs to the bacterial ribosomal protein bS1 family.

Its function is as follows. Binds mRNA; thus facilitating recognition of the initiation point. It is needed to translate mRNA with a short Shine-Dalgarno (SD) purine-rich sequence. This chain is Small ribosomal subunit protein bS1 (rpsA), found in Neisseria meningitidis serogroup B (strain ATCC BAA-335 / MC58).